The primary structure comprises 394 residues: Phosphopentomutase (394 aa).

Mn(2+) is bound by residues D14, D287, H292, D328, H329, and H340.

This sequence belongs to the phosphopentomutase family. It depends on Mn(2+) as a cofactor.

It is found in the cytoplasm. It catalyses the reaction 2-deoxy-alpha-D-ribose 1-phosphate = 2-deoxy-D-ribose 5-phosphate. It carries out the reaction alpha-D-ribose 1-phosphate = D-ribose 5-phosphate. It functions in the pathway carbohydrate degradation; 2-deoxy-D-ribose 1-phosphate degradation; D-glyceraldehyde 3-phosphate and acetaldehyde from 2-deoxy-alpha-D-ribose 1-phosphate: step 1/2. Its function is as follows. Isomerase that catalyzes the conversion of deoxy-ribose 1-phosphate (dRib-1-P) and ribose 1-phosphate (Rib-1-P) to deoxy-ribose 5-phosphate (dRib-5-P) and ribose 5-phosphate (Rib-5-P), respectively. This is Phosphopentomutase from Listeria innocua serovar 6a (strain ATCC BAA-680 / CLIP 11262).